Reading from the N-terminus, the 202-residue chain is Dephospho-CoA kinase (202 aa).

Positions F4–S202 constitute a DPCK domain. A12 to T17 is an ATP binding site.

It belongs to the CoaE family.

It localises to the cytoplasm. The enzyme catalyses 3'-dephospho-CoA + ATP = ADP + CoA + H(+). The protein operates within cofactor biosynthesis; coenzyme A biosynthesis; CoA from (R)-pantothenate: step 5/5. Functionally, catalyzes the phosphorylation of the 3'-hydroxyl group of dephosphocoenzyme A to form coenzyme A. The sequence is that of Dephospho-CoA kinase from Latilactobacillus sakei subsp. sakei (strain 23K) (Lactobacillus sakei subsp. sakei).